Reading from the N-terminus, the 274-residue chain is Octanoyltransferase LipM (274 aa).

In terms of domain architecture, BPL/LPL catalytic spans 31–245 (GEVPPTLRLY…GFAEALGARL (215 aa)). Cysteine 147 acts as the Acyl-thioester intermediate in catalysis.

This sequence belongs to the octanoyltransferase LipM family. As to quaternary structure, monomer.

It catalyses the reaction octanoyl-[ACP] + L-lysyl-[protein] = N(6)-octanoyl-L-lysyl-[protein] + holo-[ACP] + H(+). It participates in protein modification; protein lipoylation via endogenous pathway; protein N(6)-(lipoyl)lysine from octanoyl-[acyl-carrier-protein]. Catalyzes the transfer of endogenously produced octanoic acid from octanoyl-acyl-carrier-protein onto the lipoyl domain of GcvH, an intermediate carrier during protein lipoylation. This is Octanoyltransferase LipM from Kyrpidia tusciae (strain DSM 2912 / NBRC 15312 / T2) (Bacillus tusciae).